We begin with the raw amino-acid sequence, 184 residues long: Protein CPn_0803/CP_1068/CPj0803/CpB0832 (184 aa).

It belongs to the chlamydial CPn_0803/CT_584/TC_0873 family.

This Chlamydia pneumoniae (Chlamydophila pneumoniae) protein is Protein CPn_0803/CP_1068/CPj0803/CpB0832.